Here is a 587-residue protein sequence, read N- to C-terminus: Kelch-like protein 3 (587 aa).

Ser10 bears the Phosphoserine mark. The BTB domain maps to 50–117; the sequence is CDVMIVAEDV…VYTAEIEVTE (68 aa). The BACK domain occupies 152–254; sequence CLGIRAFADV…PRDYLVQTVE (103 aa). Thr295 is modified (phosphothreonine). 6 Kelch repeats span residues 302 to 347, 348 to 394, 396 to 441, 442 to 490, 491 to 537, and 539 to 585; these read VMIV…FMAG, HVYA…VLND, LYAV…VVEG, KLYA…VLSG, QLYA…AVNG, and LYVV…VIHK. A Phosphothreonine modification is found at Thr375. Ser376 and Ser433 each carry phosphoserine.

It belongs to the KLHL3 family. In terms of assembly, homodimer. Component of the BCR(KLHL3) E3 ubiquitin ligase complex, at least composed of CUL3 and KLHL3 and RBX1. Interacts with CLDN8. Post-translationally, phosphorylation at Ser-433 by PKA or PKC decreases the interaction with WNK1 and WNK4, leading to inhibit their degradation by the BCR(KLHL3) complex. Phosphorylated at Ser-433 by PKC in response to angiotensin II signaling, decreasing ability to promote degradation of WNK1 and WNK4, leading to activation of Na-Cl cotransporter SLC12A3/NCC. Phosphorylation at Ser-433 is increased by insulin. Dephosphorylated at Ser-433 by calcineurin PPP3CA, promoting degradation of WNK1 and WNK4.

It is found in the cytoplasm. The protein resides in the cytoskeleton. Its subcellular location is the cytosol. The protein operates within protein modification; protein ubiquitination. Substrate-specific adapter of a BCR (BTB-CUL3-RBX1) E3 ubiquitin ligase complex that acts as a regulator of ion transport in the distal nephron. The BCR(KLHL3) complex acts by mediating ubiquitination and degradation of WNK1 and WNK4, two activators of Na-Cl cotransporter SLC12A3/NCC in distal convoluted tubule cells of kidney, thereby regulating NaCl reabsorption. The BCR(KLHL3) complex also mediates ubiquitination and degradation of WNK3. The BCR(KLHL3) complex also mediates ubiquitination of CLDN8, a tight-junction protein required for paracellular chloride transport in the kidney, leading to its degradation. The polypeptide is Kelch-like protein 3 (KLHL3) (Pongo abelii (Sumatran orangutan)).